The chain runs to 223 residues: MSTELVEDETQFYGKAQNYWKNVPATVDGMLGGYGHISNTDLNSSKKFLQRFLREGSQKTGNTCALDCGAGIGRITKRLLLPLFKTVDMVDVTDEFLNKAKSYLGEEGKRVGKYFCCGLQEFSPEPSRYDVIWIQWVIGHLTDEHLVSFLQRCKLGLRPNGIILIKDNVTQDGSIMDDADSSICRDIDLVRKLIKQAGLSVLAIERQENFPDEIYQVFSFAMR.

Residues Gly69, Arg74, 91 to 93 (DVT), 119 to 120 (LQ), and Gln135 each bind S-adenosyl-L-methionine.

Belongs to the methyltransferase superfamily. NTM1 family.

The protein resides in the nucleus. The enzyme catalyses N-terminal L-alanyl-L-prolyl-L-lysyl-[protein] + 3 S-adenosyl-L-methionine = N-terminal N,N,N-trimethyl-L-alanyl-L-prolyl-L-lysyl-[protein] + 3 S-adenosyl-L-homocysteine + 3 H(+). It carries out the reaction N-terminal L-seryl-L-prolyl-L-lysyl-[protein] + 3 S-adenosyl-L-methionine = N-terminal N,N,N-trimethyl-L-seryl-L-prolyl-L-lysyl-[protein] + 3 S-adenosyl-L-homocysteine + 3 H(+). The catalysed reaction is N-terminal L-prolyl-L-prolyl-L-lysyl-[protein] + 2 S-adenosyl-L-methionine = N-terminal N,N-dimethyl-L-prolyl-L-prolyl-L-lysyl-[protein] + 2 S-adenosyl-L-homocysteine + 2 H(+). Distributive alpha-N-methyltransferase that methylates the N-terminus of target proteins containing the N-terminal motif [Ala/Gly/Pro/Ser]-Pro-Lys when the initiator Met is cleaved. Specifically catalyzes mono-, di- or tri-methylation of the exposed alpha-amino group of the Ala, Gly or Ser residue in the [Ala/Gly/Ser]-Pro-Lys motif and mono- or di-methylation of Pro in the Pro-Pro-Lys motif. Required during mitosis for normal bipolar spindle formation and chromosome segregation via its action on target proteins. The sequence is that of N-terminal Xaa-Pro-Lys N-methyltransferase 1-B (ntmt1-b) from Xenopus laevis (African clawed frog).